Here is a 156-residue protein sequence, read N- to C-terminus: CKLF-like MARVEL transmembrane domain-containing protein 5 (156 aa).

The MARVEL domain maps to 29–146 (FLSSLKGILL…DAFKIYRTEL (118 aa)). The next 4 helical transmembrane spans lie at 35 to 55 (GILL…FTAS), 56 to 76 (ISAY…FLFL), 93 to 113 (LDFL…FAAV), and 119 to 139 (AAIA…YDAF).

The protein belongs to the chemokine-like factor family.

The protein localises to the membrane. In Mus musculus (Mouse), this protein is CKLF-like MARVEL transmembrane domain-containing protein 5 (Cmtm5).